The following is a 406-amino-acid chain: Putative competence-damage inducible protein (406 aa).

The protein belongs to the CinA family.

The polypeptide is Putative competence-damage inducible protein (Natranaerobius thermophilus (strain ATCC BAA-1301 / DSM 18059 / JW/NM-WN-LF)).